Here is a 162-residue protein sequence, read N- to C-terminus: Ribosome-binding factor A (162 aa).

The segment at 123–162 (VARVAAGASPAGDPDPYKEPRVEDADDAEVDEPSRSRQAD) is disordered. Residues 125–136 (RVAAGASPAGDP) are compositionally biased toward low complexity.

This sequence belongs to the RbfA family. As to quaternary structure, monomer. Binds 30S ribosomal subunits, but not 50S ribosomal subunits or 70S ribosomes.

It localises to the cytoplasm. Functionally, one of several proteins that assist in the late maturation steps of the functional core of the 30S ribosomal subunit. Associates with free 30S ribosomal subunits (but not with 30S subunits that are part of 70S ribosomes or polysomes). Required for efficient processing of 16S rRNA. May interact with the 5'-terminal helix region of 16S rRNA. This chain is Ribosome-binding factor A, found in Rhodococcus opacus (strain B4).